The primary structure comprises 311 residues: Formimidoylglutamase (311 aa).

Positions 130, 155, 157, 159, 242, and 244 each coordinate Mn(2+).

This sequence belongs to the arginase family. Mn(2+) serves as cofactor.

It catalyses the reaction N-formimidoyl-L-glutamate + H2O = formamide + L-glutamate. Its pathway is amino-acid degradation; L-histidine degradation into L-glutamate; L-glutamate from N-formimidoyl-L-glutamate (hydrolase route): step 1/1. Its function is as follows. Catalyzes the conversion of N-formimidoyl-L-glutamate to L-glutamate and formamide. The polypeptide is Formimidoylglutamase (Staphylococcus epidermidis (strain ATCC 35984 / DSM 28319 / BCRC 17069 / CCUG 31568 / BM 3577 / RP62A)).